Here is a 166-residue protein sequence, read N- to C-terminus: Small ribosomal subunit protein bS6 (166 aa).

The segment at 97 to 166 is disordered; the sequence is EEGPSAMMRK…EEAETATDGE (70 aa). The segment covering 105 to 159 has biased composition (basic and acidic residues); it reads RKADRDRERDDRGGGFRGEREGGFRGDREGGFRGGDRDGGGFRGDRGPRRPREEA.

Belongs to the bacterial ribosomal protein bS6 family.

Its function is as follows. Binds together with bS18 to 16S ribosomal RNA. In Bradyrhizobium diazoefficiens (strain JCM 10833 / BCRC 13528 / IAM 13628 / NBRC 14792 / USDA 110), this protein is Small ribosomal subunit protein bS6.